Here is a 621-residue protein sequence, read N- to C-terminus: Replication factor A protein 1 (621 aa).

At Ser2 the chain carries N-acetylserine. Residue Ser178 is modified to Phosphoserine; by ATM or ATR. A DNA-binding region (OB) is located at residues 197–284; the sequence is WTIKARVSYK…PYELNLDRDT (88 aa). Residues 486–508 form a C4-type zinc finger; sequence CSNENCNKKVLEQPDGTWRCEKC.

This sequence belongs to the replication factor A protein 1 family. In terms of assembly, component of the heterotrimeric canonical replication protein A complex (RPA). Interacts with POB3. The N-terminus is blocked.

The protein resides in the nucleus. Functionally, as part of the replication protein A (RPA/RP-A), a single-stranded DNA-binding heterotrimeric complex, may play an essential role in DNA replication, recombination and repair. Binds and stabilizes single-stranded DNA intermediates, preventing complementary DNA reannealing and recruiting different proteins involved in DNA metabolism. Binds to single-stranded sequences participating in DNA replication in addition to those mediating transcriptional repression (URS1) and activation (CAR1). Stimulates the activity of a cognate strand exchange protein (SEP1). It cooperates with T-AG and DNA topoisomerase I to unwind template DNA containing the simian virus 40 origin of DNA replication. The sequence is that of Replication factor A protein 1 (RFA1) from Saccharomyces cerevisiae (strain ATCC 204508 / S288c) (Baker's yeast).